Reading from the N-terminus, the 564-residue chain is Probable cysteine--tRNA ligase, mitochondrial (564 aa).

Cysteine 78 contributes to the Zn(2+) binding site. Glycine 79 serves as a coordination point for L-cysteine. The 'HIGH' region motif lies at 80–90; it reads PTVYDHAHLGH. Residue threonine 119 participates in L-cysteine binding. The 'KIIK' region signature appears at 124–127; it reads KIIK. Zn(2+) is bound by residues cysteine 257, histidine 282, and glutamate 286. Histidine 282 is an L-cysteine binding site. A 'KMSKS' region motif is present at residues 317–321; that stretch reads KMSKS. ATP is bound at residue lysine 320.

This sequence belongs to the class-I aminoacyl-tRNA synthetase family. The cofactor is Zn(2+).

The protein resides in the mitochondrion. The enzyme catalyses tRNA(Cys) + L-cysteine + ATP = L-cysteinyl-tRNA(Cys) + AMP + diphosphate. It carries out the reaction 2 L-cysteine = S-sulfanyl-L-cysteine + L-alanine. It catalyses the reaction S-sulfanyl-L-cysteine + L-cysteine = S-disulfanyl-L-cysteine + L-alanine. The catalysed reaction is S-sulfanyl-L-cysteine + tRNA(Cys) + ATP = (S)-sulfanyl-L-cysteinyl-tRNA(Cys) + AMP + diphosphate. The enzyme catalyses S-disulfanyl-L-cysteine + tRNA(Cys) + ATP = (S)-disulfanyl-L-cysteinyl-tRNA(Cys) + AMP + diphosphate. Mitochondrial cysteine-specific aminoacyl-tRNA synthetase that catalyzes the ATP-dependent ligation of cysteine to tRNA(Cys). Its function is as follows. In addition to its role as an aminoacyl-tRNA synthetase, has also cysteine persulfide synthase activity. Produces reactive persulfide species such as cysteine persulfide (CysSSH) from substrate cysteine and mediate direct incorporation of CysSSH into proteins during translations, resulting in protein persulfides and polysulfides. CysSSHs behave as potent antioxidants and cellular protectants. The chain is Probable cysteine--tRNA ligase, mitochondrial from Homo sapiens (Human).